The primary structure comprises 367 residues: mRNA-decapping enzyme-like protein (367 aa).

Disordered regions lie at residues 144 to 179, 196 to 246, and 299 to 333; these read PKAS…RDAP, NTAS…SSSP, and PNNA…PTGP. Polar residues predominate over residues 196–211; the sequence is NTASGSASGPYQSSAI. Positions 212–234 are enriched in low complexity; sequence PHQPHQPHQPTIAPPVAAAAPPQ. Residues 299–309 are compositionally biased toward polar residues; sequence PNNASHQQRSY. The span at 315-331 shows a compositional bias: pro residues; sequence QPFPPPTPPPSLAPAPT.

This sequence belongs to the DCP1 family. As to quaternary structure, homodimer. Component of the decapping complex. Interacts with DCP2 and DCP5. Interacts with BCHA1. In terms of tissue distribution, expressed in seedlings, mostly in root tips, root hairs, and the vascular system. Also present in roots, leaves, stems, and flowers.

It localises to the cytoplasm. The protein resides in the P-body. In terms of biological role, as a component of the decapping complex, involved in the degradation of mRNAs. Essential for postembryonic development. The polypeptide is mRNA-decapping enzyme-like protein (Arabidopsis thaliana (Mouse-ear cress)).